Consider the following 139-residue polypeptide: Small ribosomal subunit protein uS12 (139 aa).

Residue aspartate 102 is modified to 3-methylthioaspartic acid. The tract at residues 116–139 (DTTGVAKRSQGRSKYGAKRPKKSK) is disordered. The span at 124–139 (SQGRSKYGAKRPKKSK) shows a compositional bias: basic residues.

The protein belongs to the universal ribosomal protein uS12 family. As to quaternary structure, part of the 30S ribosomal subunit. Contacts proteins S8 and S17. May interact with IF1 in the 30S initiation complex.

Its function is as follows. With S4 and S5 plays an important role in translational accuracy. Functionally, interacts with and stabilizes bases of the 16S rRNA that are involved in tRNA selection in the A site and with the mRNA backbone. Located at the interface of the 30S and 50S subunits, it traverses the body of the 30S subunit contacting proteins on the other side and probably holding the rRNA structure together. The combined cluster of proteins S8, S12 and S17 appears to hold together the shoulder and platform of the 30S subunit. The protein is Small ribosomal subunit protein uS12 of Mesomycoplasma hyopneumoniae (strain 7448) (Mycoplasma hyopneumoniae).